A 93-amino-acid chain; its full sequence is Co-chaperonin GroES (93 aa).

This sequence belongs to the GroES chaperonin family. In terms of assembly, heptamer of 7 subunits arranged in a ring. Interacts with the chaperonin GroEL.

The protein resides in the cytoplasm. Its function is as follows. Together with the chaperonin GroEL, plays an essential role in assisting protein folding. The GroEL-GroES system forms a nano-cage that allows encapsulation of the non-native substrate proteins and provides a physical environment optimized to promote and accelerate protein folding. GroES binds to the apical surface of the GroEL ring, thereby capping the opening of the GroEL channel. The sequence is that of Co-chaperonin GroES from Streptococcus anginosus.